Here is a 482-residue protein sequence, read N- to C-terminus: C3a anaphylatoxin chemotactic receptor (482 aa).

Over 1–23 (MASFSAETNSTDLLSQPWNEPPV) the chain is Extracellular. N-linked (GlcNAc...) asparagine glycosylation is present at Asn-9. The helical transmembrane segment at 24-46 (ILSMVILSLTFLLGLPGNGLVLW) threads the bilayer. The Cytoplasmic segment spans residues 47–57 (VAGLKMQRTVN). The chain crosses the membrane as a helical span at residues 58-80 (TIWFLHLTLADLLCCLSLPFSLA). The Extracellular portion of the chain corresponds to 81–96 (HLALQGQWPYGRFLCK). Cys-95 and Cys-172 are disulfide-bonded. Residues 97 to 118 (LIPSIIVLNMFASVFLLTAISL) form a helical membrane-spanning segment. Topologically, residues 119–139 (DRCLVVFKPIWCQNHRNVGMA) are cytoplasmic. Residues 140–160 (CSICGCIWVVAFVMCIPVFVY) form a helical membrane-spanning segment. Topologically, residues 161–340 (REIFTTDNHN…TPLVAITITR (180 aa)) are extracellular. Sulfotyrosine is present on residues Tyr-174 and Tyr-184. Asn-194 carries N-linked (GlcNAc...) asparagine glycosylation. O-linked (GalNAc...) serine glycosylation is present at Ser-266. Tyr-318 carries the sulfotyrosine modification. The helical transmembrane segment at 341–360 (LVVGFLLPSVIMIACYSFIV) threads the bilayer. Residues 361–377 (FRMQRGRFAKSQSKTFR) lie on the Cytoplasmic side of the membrane. The helical transmembrane segment at 378–400 (VAVVVVAVFLVCWTPYHIFGVLS) threads the bilayer. At 401-417 (LLTDPETPLGKTLMSWD) the chain is on the extracellular side. A helical transmembrane segment spans residues 418–438 (HVCIALASANSCFNPFLYALL). At 439–482 (GKDFRKKARQSIQGILEAAFSEELTRSTHCPSNNVISERNSTTV) the chain is on the cytoplasmic side. Residue Ser-459 is modified to Phosphoserine. Thr-463 carries the post-translational modification Phosphothreonine.

The protein belongs to the G-protein coupled receptor 1 family. Interacts with VGF-derived peptide TLQP-21. Post-translationally, among the sulfation sites Tyr-174 is essential for binding of C3a anaphylatoxin. O-glycosylated. Widely expressed in several differentiated hematopoietic cell lines, in the lung, spleen, ovary, placenta, small intestine, throughout the brain, heart, and endothelial cells. Mostly expressed in lymphoid tissues.

It is found in the cell membrane. In terms of biological role, receptor for the chemotactic and inflammatory peptide anaphylatoxin C3a. This receptor stimulates chemotaxis, granule enzyme release and superoxide anion production. This Homo sapiens (Human) protein is C3a anaphylatoxin chemotactic receptor (C3AR1).